Here is a 405-residue protein sequence, read N- to C-terminus: MRFIDEAVVTVKAGDGGNGIASFRREKYVPRGGPDGGDGGKGGDVYVIAEDNTNTLVDYRYTRRHDAMRAENGHSRNCSGKGSDDLFLPVPIGTTIVDTETDEVLGDLIEIGQTLLIAKGGDGGLGNTHFKSSTNQAPRKATSGFEGELKVLKFELKVVADVGLIGLPNAGKSTFIRQVSAARPKVADYPFTTLVPNLGVVDIGRHRSFVMADIPGLIEGASEGAGLGIRFLKHVARTRRLLHLVDIKPIDGSDPVENARIILNELDRFSPELANLPQILVLNKIDQVPEEELNELCTHIVAELGWTGIVFRTATLTGEGVDAIKYHLMNEIEREREREIEDPIFAEAQKARFERLEAEVRLNTEAQREAYRAARKAAREGTDLSDDDFDGSDDDDDGVEVIYAP.

The 159-residue stretch at 1–159 (MRFIDEAVVT…KVLKFELKVV (159 aa)) folds into the Obg domain. An OBG-type G domain is found at 160–333 (ADVGLIGLPN…IKYHLMNEIE (174 aa)). Residues 166-173 (GLPNAGKS), 191-195 (FTTLV), 213-216 (DIPG), 283-286 (NKID), and 314-316 (ATL) each bind GTP. Positions 173 and 193 each coordinate Mg(2+). Basic and acidic residues predominate over residues 371–382 (YRAARKAAREGT). Residues 371 to 405 (YRAARKAAREGTDLSDDDFDGSDDDDDGVEVIYAP) form a disordered region. The span at 383 to 399 (DLSDDDFDGSDDDDDGV) shows a compositional bias: acidic residues.

This sequence belongs to the TRAFAC class OBG-HflX-like GTPase superfamily. OBG GTPase family. In terms of assembly, monomer. Requires Mg(2+) as cofactor.

It localises to the cytoplasm. Its function is as follows. An essential GTPase which binds GTP, GDP and possibly (p)ppGpp with moderate affinity, with high nucleotide exchange rates and a fairly low GTP hydrolysis rate. Plays a role in control of the cell cycle, stress response, ribosome biogenesis and in those bacteria that undergo differentiation, in morphogenesis control. The protein is GTPase Obg of Psychrobacter arcticus (strain DSM 17307 / VKM B-2377 / 273-4).